The chain runs to 503 residues: MSSIEGPVRVRFAPSPTGSLHIGGVRTALFNWLCARHYGGQFILRIEDTDEKRFVPGAADDISASLRWVGIDWDEGPDVGGPYGPYVQSERFEQGIYQPFINQLLEAGLAYMSFTTEEELAQMRAAAEAAGIKAFRFRGPERDWPLERQREEAASGKPYTIRLKTPLEGETRFRDLIRGGDEIVVQNNQLQDIVLIKSTGMPVYHFAHLVDDHLMKITHVMRGEEWVPSTPYHVLLYDFFGWPRPVFAHLPAILRQDGRGKLSKRKDDVATQRFRERGYLPETIFNYLALQGWSYDGVTEIMTRDELIARFTLERIQPSPARWNPEKLRDMNGIYIRKLTTEQLAERVLPFMQRAGLIGDPASETERAYLISLIPLIHERLEELQEAPDLLAFFYQDVVPGETYNPADLIPKKHDAAQTVALLRAAHEALSQQTDWTPPALETTLRALCEQLQVKPGPLFGAIRVAITGRSVAPPLFDTLAGVGRERSLSRLAAAIAALENLA.

The 'HIGH' region signature appears at 14–24; that stretch reads PSPTGSLHIGG. Residues 261-265 carry the 'KMSKS' region motif; the sequence is KLSKR. Lys-264 is an ATP binding site.

Belongs to the class-I aminoacyl-tRNA synthetase family. Glutamate--tRNA ligase type 1 subfamily. In terms of assembly, monomer.

Its subcellular location is the cytoplasm. It carries out the reaction tRNA(Glu) + L-glutamate + ATP = L-glutamyl-tRNA(Glu) + AMP + diphosphate. In terms of biological role, catalyzes the attachment of glutamate to tRNA(Glu) in a two-step reaction: glutamate is first activated by ATP to form Glu-AMP and then transferred to the acceptor end of tRNA(Glu). The polypeptide is Glutamate--tRNA ligase (Chloroflexus aurantiacus (strain ATCC 29366 / DSM 635 / J-10-fl)).